A 561-amino-acid chain; its full sequence is 2-succinyl-5-enolpyruvyl-6-hydroxy-3-cyclohexene-1-carboxylate synthase (561 aa).

This sequence belongs to the TPP enzyme family. MenD subfamily. As to quaternary structure, homodimer. The cofactor is Mg(2+). It depends on Mn(2+) as a cofactor. Thiamine diphosphate serves as cofactor.

It catalyses the reaction isochorismate + 2-oxoglutarate + H(+) = 5-enolpyruvoyl-6-hydroxy-2-succinyl-cyclohex-3-ene-1-carboxylate + CO2. The protein operates within quinol/quinone metabolism; 1,4-dihydroxy-2-naphthoate biosynthesis; 1,4-dihydroxy-2-naphthoate from chorismate: step 2/7. It functions in the pathway cofactor biosynthesis; phylloquinone biosynthesis. Functionally, catalyzes the thiamine diphosphate-dependent decarboxylation of 2-oxoglutarate and the subsequent addition of the resulting succinic semialdehyde-thiamine pyrophosphate anion to isochorismate to yield 2-succinyl-5-enolpyruvyl-6-hydroxy-3-cyclohexene-1-carboxylate (SEPHCHC). This chain is 2-succinyl-5-enolpyruvyl-6-hydroxy-3-cyclohexene-1-carboxylate synthase, found in Synechococcus sp. (strain CC9605).